The sequence spans 574 residues: Bifunctional NADP phosphatase/NAD kinase (574 aa).

The NADP phosphatase stretch occupies residues 1–297; that stretch reads MVIMEGFKIA…KLIALFGNRW (297 aa). Mg(2+)-binding residues include E69, D87, I89, D90, and D243. Residues 302–574 are NAD kinase; sequence VKFGIVVRED…NKLSRCLGIK (273 aa). The Proton acceptor role is filled by D362. NAD(+) contacts are provided by residues 362–363, R367, 436–437, K447, R464, D466, and 477–482; these read DG, NE, and TAYSLS.

In the N-terminal section; belongs to the inositol monophosphatase superfamily. It in the C-terminal section; belongs to the NAD kinase family. Homotetramer. Requires Mg(2+) as cofactor.

The protein resides in the cytoplasm. The catalysed reaction is NAD(+) + ATP = ADP + NADP(+) + H(+). It catalyses the reaction NADP(+) + H2O = phosphate + NAD(+). It carries out the reaction UTP + NAD(+) = UDP + NADP(+) + H(+). The enzyme catalyses 5-methyl-UTP + NAD(+) = 5-methyl-UDP + NADP(+) + H(+). The catalysed reaction is CTP + NAD(+) = CDP + NADP(+) + H(+). It catalyses the reaction GTP + NAD(+) = GDP + NADP(+) + H(+). It carries out the reaction dATP + NAD(+) = dADP + NADP(+) + H(+). The enzyme catalyses NADPH + H2O = phosphate + NADH. The catalysed reaction is adenosine 2'-phosphate + H2O = adenosine + phosphate. It catalyses the reaction beta-D-fructose 1,6-bisphosphate + H2O = beta-D-fructose 6-phosphate + phosphate. With respect to regulation, phosphatase activity is slightly inhibited by ADP, NADH and ATP, and moderately inhibited by NAD and 5'-AMP. Kinase activity is slightly inhibited by ADP and NADP. In terms of biological role, involved in the regulation of the intracellular balance between NAD(H) and NADP(H), and is a key enzyme in the biosynthesis of NADP. Catalyzes the phosphorylation and dephosphorylation of NAD and NADP, respectively. Although it shows conflicting dual activities and is able to supply NADP, it seems that its physiological role is to prevent excess accumulation of NADP. Kinase can use ATP and other nucleoside triphosphates (UTP, TTP, CTP, GTP) as well as inorganic polyphosphate (poly(P)) as phosphoryl donors, however poly(P) is not considered to be the physiological phosphoryl donor. NAD is the preferred substrate for the kinase, but NADH can also be used as phosphoryl acceptor. Phosphatase can use NADP or NADPH as phosphoryl donor, but NADP is the preferred substrate. Phosphatase also has an activity toward the terminal phosphate group at C-2 of adenosine in 2'-AMP and toward the phosphate group at C-1 of fructose 1,6-bisphosphate, but not toward inositol 1-phosphate. In Methanocaldococcus jannaschii (strain ATCC 43067 / DSM 2661 / JAL-1 / JCM 10045 / NBRC 100440) (Methanococcus jannaschii), this protein is Bifunctional NADP phosphatase/NAD kinase.